Here is a 386-residue protein sequence, read N- to C-terminus: MQMADLEKKLENSVLPPLLKRELSEKILKDGLSEEYLVDEIISETTRAYERTLVEPGEAVGVVAAQSIGEPGTQMTMRTFHYAGVAELNVTLGLPRMIEIVDARKEPSTPTMTIYLNDEFKGDREKASMVAKNIESTNVESVSEDISVDLVNECITIILNSQQLESRGLTVPDVIEAIKSKMKLKIDDHENVLNLKIKTPSLKALRKRLPKVRAIHLKGVQNIKRVIIRKEVDEYILYSEGSNIKEVFDIEGVDTTKTTTNNIVEIQDVLGIEAARNAIIYEMDATLGNQGLTVDKRHLMMVADLMCTDGVVKPIGRHGIGGEKASVLARAAFEETVKHLYSASMRGYVDELGGVVENIIVGKPIAMGTGCIDICIDKTYEEGKEL.

It belongs to the RNA polymerase beta' chain family. In terms of assembly, part of the RNA polymerase complex.

The protein localises to the cytoplasm. The enzyme catalyses RNA(n) + a ribonucleoside 5'-triphosphate = RNA(n+1) + diphosphate. Its function is as follows. DNA-dependent RNA polymerase (RNAP) catalyzes the transcription of DNA into RNA using the four ribonucleoside triphosphates as substrates. Forms part of the jaw domain. This chain is DNA-directed RNA polymerase subunit Rpo1C, found in Methanococcus maripaludis (strain C5 / ATCC BAA-1333).